A 156-amino-acid polypeptide reads, in one-letter code: Zinc finger SWIM domain-containing protein 7 homolog (156 aa).

The SWIM-type zinc-finger motif lies at 82–120; it reads YMCLIQGDYCSCPSFNFSVLLKSDSVYCKHQISSILAEI.

This sequence belongs to the SWS1 family.

The protein resides in the nucleus. In terms of biological role, may be involved in the homologous recombination repair (HRR) pathway of double-stranded DNA breaks arising during DNA replication or induced by DNA-damaging agents. This is Zinc finger SWIM domain-containing protein 7 homolog (zswim7) from Dictyostelium discoideum (Social amoeba).